Consider the following 364-residue polypeptide: DNA replication and repair protein RecF (364 aa).

Position 30–37 (30–37) interacts with ATP; it reads GENGSGKT.

It belongs to the RecF family.

The protein localises to the cytoplasm. Functionally, the RecF protein is involved in DNA metabolism; it is required for DNA replication and normal SOS inducibility. RecF binds preferentially to single-stranded, linear DNA. It also seems to bind ATP. In Xylella fastidiosa (strain M23), this protein is DNA replication and repair protein RecF.